The sequence spans 98 residues: HssA/B-like protein 50 (98 aa).

2 disordered regions span residues 1–26 (MTLF…SFGS) and 68–98 (TRGS…CCGI). Gly residues predominate over residues 84 to 98 (GHGGMGGGNGSCCGI).

The protein belongs to the hssA/B family.

The chain is HssA/B-like protein 50 (hssl50) from Dictyostelium discoideum (Social amoeba).